Consider the following 330-residue polypeptide: 4-hydroxythreonine-4-phosphate dehydrogenase (330 aa).

2 residues coordinate substrate: His136 and Thr137. 3 residues coordinate a divalent metal cation: His166, His211, and His266. Substrate-binding residues include Lys274, Asn283, and Arg292.

It belongs to the PdxA family. In terms of assembly, homodimer. It depends on Zn(2+) as a cofactor. Requires Mg(2+) as cofactor. Co(2+) serves as cofactor.

It is found in the cytoplasm. The enzyme catalyses 4-(phosphooxy)-L-threonine + NAD(+) = 3-amino-2-oxopropyl phosphate + CO2 + NADH. Its pathway is cofactor biosynthesis; pyridoxine 5'-phosphate biosynthesis; pyridoxine 5'-phosphate from D-erythrose 4-phosphate: step 4/5. In terms of biological role, catalyzes the NAD(P)-dependent oxidation of 4-(phosphooxy)-L-threonine (HTP) into 2-amino-3-oxo-4-(phosphooxy)butyric acid which spontaneously decarboxylates to form 3-amino-2-oxopropyl phosphate (AHAP). This is 4-hydroxythreonine-4-phosphate dehydrogenase from Erwinia tasmaniensis (strain DSM 17950 / CFBP 7177 / CIP 109463 / NCPPB 4357 / Et1/99).